We begin with the raw amino-acid sequence, 570 residues long: Hydroxylamine reductase (570 aa).

[4Fe-4S] cluster is bound by residues C5, C8, C17, and C23. H266, E290, C334, C425, C453, C478, E513, and K515 together coordinate hybrid [4Fe-2O-2S] cluster. The residue at position 425 (C425) is a Cysteine persulfide.

This sequence belongs to the HCP family. [4Fe-4S] cluster serves as cofactor. Requires hybrid [4Fe-2O-2S] cluster as cofactor.

It is found in the cytoplasm. The enzyme catalyses A + NH4(+) + H2O = hydroxylamine + AH2 + H(+). Its function is as follows. Catalyzes the reduction of hydroxylamine to form NH(3) and H(2)O. The polypeptide is Hydroxylamine reductase (Clostridium botulinum (strain 657 / Type Ba4)).